Here is a 163-residue protein sequence, read N- to C-terminus: 2-C-methyl-D-erythritol 2,4-cyclodiphosphate synthase (163 aa).

The a divalent metal cation site is built by aspartate 9 and histidine 11. Residues 9-11 (DVH) and 36-37 (HS) contribute to the 4-CDP-2-C-methyl-D-erythritol 2-phosphate site. Histidine 44 is an a divalent metal cation binding site. Residues 58–60 (DIG), 63–67 (FPDDD), 134–137 (TTSE), phenylalanine 141, and arginine 144 each bind 4-CDP-2-C-methyl-D-erythritol 2-phosphate.

Belongs to the IspF family. Homotrimer. The cofactor is a divalent metal cation.

It catalyses the reaction 4-CDP-2-C-methyl-D-erythritol 2-phosphate = 2-C-methyl-D-erythritol 2,4-cyclic diphosphate + CMP. It participates in isoprenoid biosynthesis; isopentenyl diphosphate biosynthesis via DXP pathway; isopentenyl diphosphate from 1-deoxy-D-xylulose 5-phosphate: step 4/6. In terms of biological role, involved in the biosynthesis of isopentenyl diphosphate (IPP) and dimethylallyl diphosphate (DMAPP), two major building blocks of isoprenoid compounds. Catalyzes the conversion of 4-diphosphocytidyl-2-C-methyl-D-erythritol 2-phosphate (CDP-ME2P) to 2-C-methyl-D-erythritol 2,4-cyclodiphosphate (ME-CPP) with a corresponding release of cytidine 5-monophosphate (CMP). The sequence is that of 2-C-methyl-D-erythritol 2,4-cyclodiphosphate synthase from Halorhodospira halophila (strain DSM 244 / SL1) (Ectothiorhodospira halophila (strain DSM 244 / SL1)).